The primary structure comprises 321 residues: Tetraacyldisaccharide 4'-kinase (321 aa).

ATP is bound at residue 54-61; sequence SVGGTGKT.

This sequence belongs to the LpxK family.

The enzyme catalyses a lipid A disaccharide + ATP = a lipid IVA + ADP + H(+). It participates in glycolipid biosynthesis; lipid IV(A) biosynthesis; lipid IV(A) from (3R)-3-hydroxytetradecanoyl-[acyl-carrier-protein] and UDP-N-acetyl-alpha-D-glucosamine: step 6/6. Its function is as follows. Transfers the gamma-phosphate of ATP to the 4'-position of a tetraacyldisaccharide 1-phosphate intermediate (termed DS-1-P) to form tetraacyldisaccharide 1,4'-bis-phosphate (lipid IVA). The sequence is that of Tetraacyldisaccharide 4'-kinase from Rickettsia rickettsii.